Consider the following 1126-residue polypeptide: NUT family member 1 (1126 aa).

Disordered regions lie at residues 1–56 (MASD…PVFS), 334–367 (IPKK…IPPE), 475–515 (EDAQ…QGAA), 537–559 (QEQT…SPSS), 664–692 (AGML…DDRG), 755–810 (ALNS…GPGL), and 932–1014 (GEGR…EELS). Over residues 30 to 55 (FAPPPPVPPDQPLWEPSPQPPIPPVF) the composition is skewed to pro residues. A compositionally biased stretch (basic residues) spans 338–353 (AASKTRAPRRRQRKPQ). Positions 962 to 975 (KLTNGQGQGSTSPR) are enriched in polar residues. Serine 973 carries the post-translational modification Phosphoserine. The segment covering 987–1005 (TPIKEKCTSADRAKRRETE) has biased composition (basic and acidic residues). Serine 1022, serine 1025, and serine 1027 each carry phosphoserine. A disordered region spans residues 1032 to 1126 (PLSTRQASGG…SKRKKRRRSQ (95 aa)). An N5-methylglutamine modification is found at glutamine 1042. Basic residues predominate over residues 1106-1126 (PRKRRRDGFVTSKRKKRRRSQ).

This sequence belongs to the NUT family. Post-translationally, methylated at Gln-1042 by N6AMT1. Phosphorylation on Ser-1022, Ser-1025 or Ser-1027 is important for cytoplasmic export.

It localises to the cytoplasm. The protein resides in the nucleus. Functionally, plays a role in the regulation of proliferation. Regulates TERT expression by modulating SP1 binding to TERT promoter binding sites. The protein is NUT family member 1 of Mus musculus (Mouse).